Here is a 113-residue protein sequence, read N- to C-terminus: Cell cycle protein GpsB (113 aa).

Positions 32-71 form a coiled coil; sequence LDNVIKDYESFTKDNQQLSDENERLRAKVDELTKQVAVGA.

The protein belongs to the GpsB family. As to quaternary structure, forms polymers through the coiled coil domains. Interacts with PBP1, MreC and EzrA.

It localises to the cytoplasm. In terms of biological role, divisome component that associates with the complex late in its assembly, after the Z-ring is formed, and is dependent on DivIC and PBP2B for its recruitment to the divisome. Together with EzrA, is a key component of the system that regulates PBP1 localization during cell cycle progression. Its main role could be the removal of PBP1 from the cell pole after pole maturation is completed. Also contributes to the recruitment of PBP1 to the division complex. Not essential for septum formation. This Lactiplantibacillus plantarum (strain ATCC BAA-793 / NCIMB 8826 / WCFS1) (Lactobacillus plantarum) protein is Cell cycle protein GpsB.